An 808-amino-acid polypeptide reads, in one-letter code: Probable E3 ubiquitin-protein ligase hulA (808 aa).

The C2 domain maps to 1-112 (MGSNLPAQPN…QMGGDEMLTR (112 aa)). 2 disordered regions span residues 134-231 (NLST…GWER) and 275-346 (RRAH…YFVD). 2 stretches are compositionally biased toward polar residues: residues 142–159 (QANGLHRSNLQSSTSSGL) and 171–198 (GPSQLDPTASNPSLNPQRVPSTTRPSST). The span at 199-210 (VAPVNGAAAPGA) shows a compositional bias: low complexity. Polar residues predominate over residues 211–220 (SRTNLSSFED). One can recognise a WW 1 domain in the interval 223–256 (GRLPAGWERREDNLGRTYYVDHNTRTTTWTRPSS). Basic and acidic residues predominate over residues 275–288 (RRAHQSRMLPEDRT). The segment covering 289 to 303 (GASSPNLQENQQAQT) has biased composition (polar residues). The segment covering 317–326 (ATGATTAGTG) has biased composition (low complexity). 2 WW domains span residues 326–359 (GELPPGWEQRTTPEGRPYFVDHNTRTTTWVDPRR) and 386–419 (GPLPSGWEMRLTNTARVYFVDHNTKTTTWDDPRL). Residues 475-808 (SASDLKKRLM…VEETLGFGQE (334 aa)) enclose the HECT domain. Residue Cys-776 is the Glycyl thioester intermediate of the active site.

Belongs to the RSP5/NEDD4 family. Interacts with creD.

It is found in the cytoplasm. It catalyses the reaction S-ubiquitinyl-[E2 ubiquitin-conjugating enzyme]-L-cysteine + [acceptor protein]-L-lysine = [E2 ubiquitin-conjugating enzyme]-L-cysteine + N(6)-ubiquitinyl-[acceptor protein]-L-lysine.. It functions in the pathway protein modification; protein ubiquitination. Functionally, E3 ubiquitin-protein ligase which accepts ubiquitin from an E2 ubiquitin-conjugating enzyme in the form of a thioester and then directly transfers the ubiquitin to targeted substrates. Probably involved in the regulatory network controlling carbon source utilization. The sequence is that of Probable E3 ubiquitin-protein ligase hulA (hulA) from Aspergillus terreus (strain NIH 2624 / FGSC A1156).